The primary structure comprises 322 residues: MSRLFLAPMEGLADYVLRDVLTDTGGYDGCVSEFVRVTGSLLPARVYERETPEILAGGYTRSGTPMVIQLLGSDPEWLARNAAYAATLSPHGIDLNFGCPAKVVNRHGGGAMLLTNPELLNRIVASVRAAVPAHIAVTAKMRLGVSDASLAIDCATALAEGGAASLVVHARTRDHGYRPPAHWDWIARIAAAVDVPVIANGDVWTVADWERCRAVSGCADVMIGRGAVSDPFLALRIRGLMDGSPSDQEWPLVLRQIATYLKKLHARIASCHEHGRVKLWLSYLKRTWPQAAELHAAIRRMQDSLEIERVLEGLPGAATAPE.

Residues 8–10 (PME) and Gln-69 each bind FMN. Cys-99 functions as the Proton donor in the catalytic mechanism. Residues Lys-140, 200 to 202 (NGD), and 224 to 225 (GR) contribute to the FMN site.

Belongs to the Dus family. DusC subfamily. FMN serves as cofactor.

It carries out the reaction 5,6-dihydrouridine(16) in tRNA + NADP(+) = uridine(16) in tRNA + NADPH + H(+). It catalyses the reaction 5,6-dihydrouridine(16) in tRNA + NAD(+) = uridine(16) in tRNA + NADH + H(+). Catalyzes the synthesis of 5,6-dihydrouridine (D), a modified base found in the D-loop of most tRNAs, via the reduction of the C5-C6 double bond in target uridines. Specifically modifies U16 in tRNAs. The polypeptide is tRNA-dihydrouridine(16) synthase (Cupriavidus necator (strain ATCC 17699 / DSM 428 / KCTC 22496 / NCIMB 10442 / H16 / Stanier 337) (Ralstonia eutropha)).